Reading from the N-terminus, the 230-residue chain is Ureidoacrylate amidohydrolase RutB (230 aa).

The Proton acceptor role is filled by aspartate 24. The active site involves lysine 133. The active-site Nucleophile is the cysteine 166.

This sequence belongs to the isochorismatase family. RutB subfamily.

The catalysed reaction is (Z)-3-ureidoacrylate + H2O + H(+) = (Z)-3-aminoacrylate + NH4(+) + CO2. It carries out the reaction (Z)-3-ureidoacrylate + H2O = (Z)-3-aminoacrylate + carbamate + H(+). The enzyme catalyses (Z)-2-methylureidoacrylate + H2O + H(+) = (Z)-2-methylaminoacrylate + NH4(+) + CO2. Hydrolyzes ureidoacrylate to form aminoacrylate and carbamate. The carbamate hydrolyzes spontaneously, thereby releasing one of the nitrogen atoms of the pyrimidine ring as ammonia and one of its carbon atoms as CO2. The sequence is that of Ureidoacrylate amidohydrolase RutB from Escherichia coli O111:H- (strain 11128 / EHEC).